Consider the following 834-residue polypeptide: Protein translocase subunit SecA (834 aa).

ATP-binding positions include Q85, 103–107 (GEGKT), and D491. Residues C818, C820, C829, and C830 each coordinate Zn(2+).

It belongs to the SecA family. Monomer and homodimer. Part of the essential Sec protein translocation apparatus which comprises SecA, SecYEG and auxiliary proteins SecDF. Other proteins may also be involved. Zn(2+) serves as cofactor.

It is found in the cell membrane. It localises to the cytoplasm. It carries out the reaction ATP + H2O + cellular proteinSide 1 = ADP + phosphate + cellular proteinSide 2.. Part of the Sec protein translocase complex. Interacts with the SecYEG preprotein conducting channel. Has a central role in coupling the hydrolysis of ATP to the transfer of proteins into and across the cell membrane, serving as an ATP-driven molecular motor driving the stepwise translocation of polypeptide chains across the membrane. This Clostridium kluyveri (strain ATCC 8527 / DSM 555 / NBRC 12016 / NCIMB 10680 / K1) protein is Protein translocase subunit SecA.